A 331-amino-acid chain; its full sequence is Phosphoribosylformylglycinamidine cyclo-ligase (331 aa).

It belongs to the AIR synthase family.

The protein localises to the cytoplasm. It catalyses the reaction 2-formamido-N(1)-(5-O-phospho-beta-D-ribosyl)acetamidine + ATP = 5-amino-1-(5-phospho-beta-D-ribosyl)imidazole + ADP + phosphate + H(+). It functions in the pathway purine metabolism; IMP biosynthesis via de novo pathway; 5-amino-1-(5-phospho-D-ribosyl)imidazole from N(2)-formyl-N(1)-(5-phospho-D-ribosyl)glycinamide: step 2/2. The polypeptide is Phosphoribosylformylglycinamidine cyclo-ligase (Clostridium tetani (strain Massachusetts / E88)).